Consider the following 354-residue polypeptide: Inactive ADP-ribosyltransferase ARH2 (354 aa).

Serine 27 is modified (phosphoserine).

It belongs to the ADP-ribosylglycohydrolase family.

The protein localises to the cytoplasm. Its subcellular location is the myofibril. It localises to the sarcomere. Functionally, required for myofibril assembly and outgrowth of the cardiac chambers in the developing heart. Appears to be catalytically inactive, showing no activity against O-acetyl-ADP-ribose. The polypeptide is Inactive ADP-ribosyltransferase ARH2 (ADPRHL1) (Homo sapiens (Human)).